Reading from the N-terminus, the 102-residue chain is Aspartyl/glutamyl-tRNA(Asn/Gln) amidotransferase subunit C (102 aa).

This sequence belongs to the GatC family. In terms of assembly, heterotrimer of A, B and C subunits.

The catalysed reaction is L-glutamyl-tRNA(Gln) + L-glutamine + ATP + H2O = L-glutaminyl-tRNA(Gln) + L-glutamate + ADP + phosphate + H(+). The enzyme catalyses L-aspartyl-tRNA(Asn) + L-glutamine + ATP + H2O = L-asparaginyl-tRNA(Asn) + L-glutamate + ADP + phosphate + 2 H(+). Its function is as follows. Allows the formation of correctly charged Asn-tRNA(Asn) or Gln-tRNA(Gln) through the transamidation of misacylated Asp-tRNA(Asn) or Glu-tRNA(Gln) in organisms which lack either or both of asparaginyl-tRNA or glutaminyl-tRNA synthetases. The reaction takes place in the presence of glutamine and ATP through an activated phospho-Asp-tRNA(Asn) or phospho-Glu-tRNA(Gln). The sequence is that of Aspartyl/glutamyl-tRNA(Asn/Gln) amidotransferase subunit C from Bordetella petrii (strain ATCC BAA-461 / DSM 12804 / CCUG 43448).